Consider the following 760-residue polypeptide: Catalase-peroxidase (760 aa).

Positions 1-45 (MKGTPFRSPHLYQEGSSCMHRTIRSVAAVLTVVLSATIPMVPAWS) are cleaved as a signal peptide. A cross-link (tryptophyl-tyrosyl-methioninium (Trp-Tyr) (with M-271)) is located at residues 124–245 (WHGAGTYRTY…LAATQMGLIY (122 aa)). The active-site Proton acceptor is the H125. A cross-link (tryptophyl-tyrosyl-methioninium (Tyr-Met) (with W-124)) is located at residues 245–271 (YVNPEGPNGVPDPVAAARDIREAFGGM). Heme b is bound at residue H286.

This sequence belongs to the peroxidase family. Peroxidase/catalase subfamily. Homodimer or homotetramer. Requires heme b as cofactor. In terms of processing, formation of the three residue Trp-Tyr-Met cross-link is important for the catalase, but not the peroxidase activity of the enzyme.

The enzyme catalyses H2O2 + AH2 = A + 2 H2O. The catalysed reaction is 2 H2O2 = O2 + 2 H2O. Its function is as follows. Bifunctional enzyme with both catalase and broad-spectrum peroxidase activity. This Granulibacter bethesdensis (strain ATCC BAA-1260 / CGDNIH1) protein is Catalase-peroxidase.